Here is a 460-residue protein sequence, read N- to C-terminus: MATGKIVQVIGAVVDVEFPQDAVPQVYSALEVKNGDARLVLEVQQQLGGGVVRTIAMGSSDGLKRGLETVDLQHPIEVPVGTATLGRIMNVLGEPIDMKGDIGEEERWAIHRSAPSYEDQSNSQDLLETGIKVIDLMCPFAKGGKVGLFGGAGVGKTVNMMELIRNIAAEHSGFSVFAGVGERTREGNDFYHEMTDSNVIDKVSLVYGQMNEPPGNRLRVALTGLTMAEKFRDEGRDVLLFIDNIYRYTLAGTEVSALLGRMPSAVGYQPTLAEEMGVLQERITSTKTGSITSVQAVYVPADDLTDPSPATTFAHLDATVVLSRQIASLGIYPAVDPLDSTSRQLDPLVVGQEHYDTARGVQSLLQRYQELKDIIAILGMDELSEEDKLVVARSRKMQRFLSQPFFVAEVFTGSPGKYVSLKDTIRGFKGIMDGEFDHLPEQAFYMVGSIEEAVEKAKKL.

150-157 (GGAGVGKT) contacts ATP.

Belongs to the ATPase alpha/beta chains family. As to quaternary structure, F-type ATPases have 2 components, CF(1) - the catalytic core - and CF(0) - the membrane proton channel. CF(1) has five subunits: alpha(3), beta(3), gamma(1), delta(1), epsilon(1). CF(0) has three main subunits: a(1), b(2) and c(9-12). The alpha and beta chains form an alternating ring which encloses part of the gamma chain. CF(1) is attached to CF(0) by a central stalk formed by the gamma and epsilon chains, while a peripheral stalk is formed by the delta and b chains.

The protein resides in the cell inner membrane. It carries out the reaction ATP + H2O + 4 H(+)(in) = ADP + phosphate + 5 H(+)(out). Its function is as follows. Produces ATP from ADP in the presence of a proton gradient across the membrane. The catalytic sites are hosted primarily by the beta subunits. The chain is ATP synthase subunit beta from Erwinia tasmaniensis (strain DSM 17950 / CFBP 7177 / CIP 109463 / NCPPB 4357 / Et1/99).